The primary structure comprises 1369 residues: ATP-dependent RNA helicase DHX29 (1369 aa).

Disordered stretches follow at residues 27 to 75 (SAEA…TNDS) and 176 to 226 (SQEF…KNME). Phosphoserine occurs at positions 71, 192, and 200. Positions 189–201 (KFQSPQIQATISP) are enriched in polar residues. The segment covering 208-226 (KTYEEDPKSKPKKEEKNME) has biased composition (basic and acidic residues). Coiled coils occupy residues 222 to 256 (EKNMEVNMKEWILRYAEQQNEEEKNENSKSLEEEE), 283 to 310 (LEKNKQGQKEAQEKIRKFQREMETLEDH), and 492 to 519 (IAKLLNKLKQQQQQQQQHSENKRENSED). A disordered region spans residues 502–526 (QQQQQQQHSENKRENSEDPEESWEN). The Helicase ATP-binding domain maps to 582 to 755 (VETLKRHRVV…FTHCPILRIS (174 aa)). 595-602 (GETGSGKS) serves as a coordination point for ATP. The short motif at 702 to 705 (DEVH) is the DEAH box element. Residues 849-1026 (LILELLAYLD…ELCLHIMKCN (178 aa)) enclose the Helicase C-terminal domain.

Belongs to the DEAD box helicase family. DEAH subfamily. As to quaternary structure, part of the 43S pre-initiation complex (PIC) that contains at least Met-tRNA, EIF1, EIF1A (EIF1AX or EIF1AY), EIF2S1, EIF2S2, EIF2S3, EIF3A, EIF3B, EIF3C, EIF3D, EIF3E, EIF3F, EIF3G, EIF3H, EIF3I, EIF3J, EIF3K, EIF3L, EIF3M, DHX29 and the 40S ribosomal subunit.

Its subcellular location is the cytoplasm. It carries out the reaction ATP + H2O = ADP + phosphate + H(+). Its function is as follows. ATP-binding RNA helicase involved in translation initiation. Part of the 43S pre-initiation complex that is required for efficient initiation on mRNAs of higher eukaryotes with structured 5'-UTRs by promoting efficient NTPase-dependent 48S complex formation. Specifically binds to the 40S ribosome near the mRNA entrance. Does not possess a processive helicase activity. The protein is ATP-dependent RNA helicase DHX29 of Homo sapiens (Human).